A 91-amino-acid chain; its full sequence is Large ribosomal subunit protein eL37 (91 aa).

Zn(2+)-binding residues include Cys-19, Cys-22, Cys-34, and Cys-37. A C4-type zinc finger spans residues 19–37 (CKRCGKSSFHIQKKRCASC).

This sequence belongs to the eukaryotic ribosomal protein eL37 family. Zn(2+) serves as cofactor.

In terms of biological role, binds to the 23S rRNA. This Caenorhabditis elegans protein is Large ribosomal subunit protein eL37.